Here is a 313-residue protein sequence, read N- to C-terminus: Porphobilinogen deaminase (313 aa).

The residue at position 242 (cysteine 242) is an S-(dipyrrolylmethanemethyl)cysteine.

Belongs to the HMBS family. Monomer. The cofactor is dipyrromethane.

The enzyme catalyses 4 porphobilinogen + H2O = hydroxymethylbilane + 4 NH4(+). The protein operates within porphyrin-containing compound metabolism; protoporphyrin-IX biosynthesis; coproporphyrinogen-III from 5-aminolevulinate: step 2/4. In terms of biological role, tetrapolymerization of the monopyrrole PBG into the hydroxymethylbilane pre-uroporphyrinogen in several discrete steps. This chain is Porphobilinogen deaminase, found in Erwinia tasmaniensis (strain DSM 17950 / CFBP 7177 / CIP 109463 / NCPPB 4357 / Et1/99).